The primary structure comprises 510 residues: Dolichyl-P-Man:Man5GlcNAc2-PP-dolichol alpha-1,3-mannosyltransferase Alg3 (510 aa).

At Met1–Ala43 the chain is on the cytoplasmic side. A helical membrane pass occupies residues Ala44–Ile64. The Lumenal portion of the chain corresponds to Gln65–Asp97. The helical transmembrane segment at Thr98–Thr118 threads the bilayer. Residues Ser119 to Arg125 are Cytoplasmic-facing. The helical transmembrane segment at Leu126 to Tyr146 threads the bilayer. Residues Ser147–Tyr171 lie on the Lumenal side of the membrane. The chain crosses the membrane as a helical span at residues Val172 to Phe192. Residues Leu193–Lys211 lie on the Cytoplasmic side of the membrane. The chain crosses the membrane as a helical span at residues Met212–Leu232. A topological domain (lumenal) is located at residue Arg233. A helical membrane pass occupies residues Thr234–Leu254. Topologically, residues Thr255 to Val294 are cytoplasmic. A helical membrane pass occupies residues Ser295–Phe315. Residues Gln316–Gln403 lie on the Lumenal side of the membrane. Residues Leu337–Lys358 are disordered. Positions Val348–Lys358 are enriched in basic and acidic residues. The helical transmembrane segment at Leu404–His424 threads the bilayer. Residues Tyr425–Gln426 are Cytoplasmic-facing. A helical membrane pass occupies residues Phe427–Gly447. Over Val448–Pro464 the chain is Lumenal. A helical transmembrane segment spans residues Ser465–Ala485. The Cytoplasmic segment spans residues Lys486–Gln510.

This sequence belongs to the glycosyltransferase ALG3 family.

It is found in the endoplasmic reticulum membrane. It catalyses the reaction an alpha-D-Man-(1-&gt;2)-alpha-D-Man-(1-&gt;2)-alpha-D-Man-(1-&gt;3)-[alpha-D-Man-(1-&gt;6)]-beta-D-Man-(1-&gt;4)-beta-D-GlcNAc-(1-&gt;4)-alpha-D-GlcNAc-diphospho-di-trans,poly-cis-dolichol + a di-trans,poly-cis-dolichyl beta-D-mannosyl phosphate = an alpha-D-Man-(1-&gt;2)-alpha-D-Man-(1-&gt;2)-alpha-D-Man-(1-&gt;3)-[alpha-D-Man-(1-&gt;3)-alpha-D-Man-(1-&gt;6)]-beta-D-Man-(1-&gt;4)-beta-D-GlcNAc-(1-&gt;4)-alpha-D-GlcNAc-diphospho-di-trans,poly-cis-dolichol + a di-trans,poly-cis-dolichyl phosphate + H(+). The protein operates within protein modification; protein glycosylation. In terms of biological role, probable alpha-1,3-mannosyltransferase involved in the N-glycosylation pathway. Involved in glycosylation of the TNF receptor grnd, regulating its ligand affinity. Required for normal epithelial growth and architecture. Suppressor of JNK-dependent intestinal stem cell proliferation. This is Dolichyl-P-Man:Man5GlcNAc2-PP-dolichol alpha-1,3-mannosyltransferase Alg3 from Drosophila melanogaster (Fruit fly).